The following is a 227-amino-acid chain: Probable cell wall protein PGA42 (227 aa).

The first 16 residues, 1–16 (MKFIILLFALIHITVA), serve as a signal peptide directing secretion. Residue asparagine 192 is glycosylated (N-linked (GlcNAc...) asparagine). Serine 200 carries the GPI-anchor amidated serine lipid modification. Residues 201-227 (GSQIFVLCVISVVGFIFFFLFFLSLFV) constitute a propeptide, removed in mature form.

Belongs to the IHD1 family. In terms of processing, the GPI-anchor is attached to the protein in the endoplasmic reticulum and serves to target the protein to the cell surface. There, the glucosamine-inositol phospholipid moiety is cleaved off and the GPI-modified mannoprotein is covalently attached via its lipidless GPI glycan remnant to the 1,6-beta-glucan of the outer cell wall layer.

It is found in the secreted. Its subcellular location is the cell wall. It localises to the membrane. Probable GPI-anchored cell wall protein that may be involved in cell wall organization, hyphal growth, as well as in virulence. The protein is Probable cell wall protein PGA42 (PGA42) of Candida albicans (strain SC5314 / ATCC MYA-2876) (Yeast).